A 446-amino-acid chain; its full sequence is Tektin-4 (446 aa).

Coiled coils occupy residues 182 to 215 (IRNV…MDYS), 297 to 346 (DAIA…NDKS), and 378 to 422 (SEVG…ANSI).

It belongs to the tektin family.

It localises to the cytoplasm. The protein resides in the cytoskeleton. Its subcellular location is the cilium axoneme. The protein localises to the cell projection. It is found in the cilium. It localises to the flagellum. Functionally, microtubule inner protein (MIP) part of the dynein-decorated doublet microtubules (DMTs) in cilia and flagellar axoneme. Forms filamentous polymers in the walls of ciliary and flagellar microtubules. Contributes to normal sperm motility. The protein is Tektin-4 (tekt4) of Xenopus laevis (African clawed frog).